Consider the following 178-residue polypeptide: Large ribosomal subunit protein bL25 (178 aa).

The protein belongs to the bacterial ribosomal protein bL25 family. CTC subfamily. Part of the 50S ribosomal subunit; part of the 5S rRNA/L5/L18/L25 subcomplex. Contacts the 5S rRNA. Binds to the 5S rRNA independently of L5 and L18.

In terms of biological role, this is one of the proteins that binds to the 5S RNA in the ribosome where it forms part of the central protuberance. In Sulfurimonas denitrificans (strain ATCC 33889 / DSM 1251) (Thiomicrospira denitrificans (strain ATCC 33889 / DSM 1251)), this protein is Large ribosomal subunit protein bL25.